We begin with the raw amino-acid sequence, 829 residues long: Ent-cassa-12,15-diene synthase (829 aa).

The interval 1 to 50 is disordered; the sequence is MMLLGSPSSGGYGGKFAGASPAGGTTTMAPSAKQPSSRAPPPGITGGRND. A compositionally biased stretch (polar residues) spans 23 to 37; sequence GGTTTMAPSAKQPSS. Mg(2+) is bound by residues D576, D580, N720, and E728. The short motif at 576-580 is the DDXXD motif element; that stretch reads DDLFD.

This sequence belongs to the terpene synthase family. The cofactor is Mg(2+). As to expression, expressed in roots and stems.

It catalyses the reaction ent-copalyl diphosphate = ent-cassa-12,15-diene + diphosphate. Its function is as follows. Involved in phytocassane phytoalexins biosynthesis. Catalyzes the conversion of ent-copalyl diphosphate to the phytoalexin precursor ent-cassa-12,15-diene. In Oryza sativa subsp. japonica (Rice), this protein is Ent-cassa-12,15-diene synthase (KSL7).